The primary structure comprises 338 residues: Inositol 2-dehydrogenase (338 aa).

It belongs to the Gfo/Idh/MocA family. Homotetramer.

The enzyme catalyses myo-inositol + NAD(+) = scyllo-inosose + NADH + H(+). Functionally, involved in the oxidation of myo-inositol (MI) to 2-keto-myo-inositol (2KMI or 2-inosose). This is Inositol 2-dehydrogenase from Azotobacter vinelandii (strain DJ / ATCC BAA-1303).